Consider the following 209-residue polypeptide: Glycolipid transfer protein A (209 aa).

Repeat copies occupy residues 45-55 (IKADITGNITK) and 56-66 (IRSVYESNPTK). The interval 45–66 (IKADITGNITKIRSVYESNPTK) is 2 X 12 AA approximate tandem repeats. 48–55 (DITGNITK) is a beta-D-galactosyl-(1-&gt;4)-beta-D-glucosyl-(1&lt;-&gt;1)-N-[(9Z)-octadecenoyl]-sphing-4-enine binding site. Beta-D-galactosyl-(1-&gt;4)-beta-D-glucosyl-(1&lt;-&gt;1)-N-[(9Z)-octadecenoyl]-sphing-4-enine-binding residues include histidine 140 and tyrosine 207.

Belongs to the GLTP family.

It localises to the cytoplasm. Accelerates the intermembrane transfer of various glycolipids. Catalyzes the transfer of various glycosphingolipids between membranes but does not catalyze the transfer of phospholipids. May be involved in the intracellular translocation of glucosylceramides. This chain is Glycolipid transfer protein A (gltp-a), found in Xenopus laevis (African clawed frog).